The chain runs to 422 residues: Testin (422 aa).

Residues 92-199 (MILTNPVPAK…GDVKLPSEMD (108 aa)) form the PET domain. Disordered stretches follow at residues 135-162 (QPVAGSEGAQYRKKQLAKQLPAHDQDPS) and 194-226 (LPSEMDVKPGDRSSLDGGDRGTTAEVGAVEDKS). Basic and acidic residues predominate over residues 194 to 212 (LPSEMDVKPGDRSSLDGGD). 3 consecutive LIM zinc-binding domains span residues 234-297 (YSCY…CDSE), 299-359 (PRCA…NHAV), and 362-422 (QGCH…MMMS).

Belongs to the prickle / espinas / testin family. Interacts via LIM domain 1 with ZYX. Interacts (via LIM domain 3) with ENAH and VASP. Interacts with ALKBH4, talin, actin, alpha-actinin, GRIP1 and PXN. Interacts (via LIM domain 2) with ACTL7A (via N-terminus). Heterodimer with ACTL7A; the heterodimer interacts with ENAH to form a heterotrimer.

It is found in the cytoplasm. The protein localises to the cell junction. Its subcellular location is the focal adhesion. Functionally, scaffold protein that may play a role in cell adhesion, cell spreading and in the reorganization of the actin cytoskeleton. Plays a role in the regulation of cell proliferation. May act as a tumor suppressor. The protein is Testin (TES) of Monodelphis domestica (Gray short-tailed opossum).